Consider the following 301-residue polypeptide: Protein FdhE homolog (301 aa).

This sequence belongs to the FdhE family.

It localises to the cytoplasm. Necessary for formate dehydrogenase activity. This Shewanella baltica (strain OS195) protein is Protein FdhE homolog.